The sequence spans 386 residues: Outer membrane protein assembly factor BamB (386 aa).

An N-terminal signal peptide occupies residues 1–20 (MKKLFNQVLVAAGVLALLAG). A lipid anchor (N-palmitoyl cysteine) is attached at Cys21. Cys21 carries S-diacylglycerol cysteine lipidation.

The protein belongs to the BamB family. In terms of assembly, part of the Bam complex.

Its subcellular location is the cell outer membrane. Its function is as follows. Part of the outer membrane protein assembly complex, which is involved in assembly and insertion of beta-barrel proteins into the outer membrane. The sequence is that of Outer membrane protein assembly factor BamB from Vibrio cholerae serotype O1 (strain ATCC 39315 / El Tor Inaba N16961).